A 368-amino-acid chain; its full sequence is UDP-N-acetylglucosamine--N-acetylmuramyl-(pentapeptide) pyrophosphoryl-undecaprenol N-acetylglucosamine transferase (368 aa).

Residues 16–18, Asn130, Arg171, Ser197, and Gln296 each bind UDP-N-acetyl-alpha-D-glucosamine; that span reads TGG.

Belongs to the glycosyltransferase 28 family. MurG subfamily.

Its subcellular location is the cell inner membrane. The enzyme catalyses di-trans,octa-cis-undecaprenyl diphospho-N-acetyl-alpha-D-muramoyl-L-alanyl-D-glutamyl-meso-2,6-diaminopimeloyl-D-alanyl-D-alanine + UDP-N-acetyl-alpha-D-glucosamine = di-trans,octa-cis-undecaprenyl diphospho-[N-acetyl-alpha-D-glucosaminyl-(1-&gt;4)]-N-acetyl-alpha-D-muramoyl-L-alanyl-D-glutamyl-meso-2,6-diaminopimeloyl-D-alanyl-D-alanine + UDP + H(+). Its pathway is cell wall biogenesis; peptidoglycan biosynthesis. Cell wall formation. Catalyzes the transfer of a GlcNAc subunit on undecaprenyl-pyrophosphoryl-MurNAc-pentapeptide (lipid intermediate I) to form undecaprenyl-pyrophosphoryl-MurNAc-(pentapeptide)GlcNAc (lipid intermediate II). This chain is UDP-N-acetylglucosamine--N-acetylmuramyl-(pentapeptide) pyrophosphoryl-undecaprenol N-acetylglucosamine transferase, found in Acidiphilium cryptum (strain JF-5).